The chain runs to 896 residues: Phosphatidate phosphatase LPIN2 (896 aa).

Positions 1–108 are N-LIP; it reads MNYVGQLAGQ…LPAYLATSPI (108 aa). Ser-106 carries the post-translational modification Phosphoserine. A disordered region spans residues 120–208; that stretch reads TPLVKSGGDE…SSNASLKEEE (89 aa). The span at 152 to 162 shows a compositional bias: basic residues; it reads VKKKKRRRKKY. Residues 153–158 carry the Nuclear localization signal motif; sequence KKKKRR. Phosphoserine is present on residues Ser-174, Ser-186, Ser-187, Ser-243, and Ser-303. Disordered regions lie at residues 370–405 and 420–459; these read AEAP…DIYL and FPKS…TECL. The span at 387-396 shows a compositional bias: basic residues; the sequence is KKKGVHKRSQ. Positions 426–448 are enriched in polar residues; sequence EPGSRQWPESDTLSGSQSPQSVG. Ser-566 is subject to Phosphoserine. Basic and acidic residues predominate over residues 569-579; it reads KQLPESKEGKS. The tract at residues 569–636 is disordered; it reads KQLPESKEGK…LSHGSTTSYK (68 aa). The span at 604–617 shows a compositional bias: acidic residues; that stretch reads SSSDEGSQELEESI. Positions 635 to 837 are C-LIP; the sequence is YKKSLRLSSD…RIFTVNPKGE (203 aa). The DXDXT motif motif lies at 689–693; the sequence is DIDGT. An LXXIL motif motif is present at residues 700–704; sequence LGQIL.

The protein belongs to the lipin family. It depends on Mg(2+) as a cofactor. In terms of tissue distribution, expressed in liver, lung, kidney, placenta, spleen, thymus, lymph node, prostate, testes, small intestine, and colon.

It is found in the nucleus. The protein resides in the cytoplasm. The protein localises to the cytosol. Its subcellular location is the endoplasmic reticulum membrane. The catalysed reaction is a 1,2-diacyl-sn-glycero-3-phosphate + H2O = a 1,2-diacyl-sn-glycerol + phosphate. Its activity is regulated as follows. Inhibited by N-ethylmaleimide. Acts as a magnesium-dependent phosphatidate phosphatase enzyme which catalyzes the conversion of phosphatidic acid to diacylglycerol during triglyceride, phosphatidylcholine and phosphatidylethanolamine biosynthesis in the endoplasmic reticulum membrane. Plays important roles in controlling the metabolism of fatty acids at different levels. Also acts as a nuclear transcriptional coactivator for PPARGC1A to modulate lipid metabolism. This Homo sapiens (Human) protein is Phosphatidate phosphatase LPIN2.